Consider the following 185-residue polypeptide: Homeobox expressed in ES cells 1 (185 aa).

Residues 108–167 (GRRPRTAFTQNQIEVLENVFRVNCYPGIDIREDLAQKLNLEEDRIQIWFQNRRAKLKRSH) constitute a DNA-binding region (homeobox).

Belongs to the ANF homeobox family. Can form heterodimers with PROP1 in binding to DNA. Interacts with TLE1.

It localises to the nucleus. Its function is as follows. Required for the normal development of the forebrain, eyes and other anterior structures such as the olfactory placodes and pituitary gland. Possible transcriptional repressor. Binds to the palindromic PIII sequence, 5'-AGCTTGAGTCTAATTGAATTAACTGTAC-3'. HESX1 and PROP1 bind as heterodimers on this palindromic site, and, in vitro, HESX1 can antagonize PROP1 activation. The protein is Homeobox expressed in ES cells 1 (HESX1) of Pan paniscus (Pygmy chimpanzee).